The sequence spans 149 residues: Peptide deformylase (149 aa).

Positions 92 and 134 each coordinate Fe cation. The active site involves E135. Residue H138 participates in Fe cation binding.

The protein belongs to the polypeptide deformylase family. Fe(2+) is required as a cofactor.

It carries out the reaction N-terminal N-formyl-L-methionyl-[peptide] + H2O = N-terminal L-methionyl-[peptide] + formate. Functionally, removes the formyl group from the N-terminal Met of newly synthesized proteins. Requires at least a dipeptide for an efficient rate of reaction. N-terminal L-methionine is a prerequisite for activity but the enzyme has broad specificity at other positions. The sequence is that of Peptide deformylase from Buchnera aphidicola subsp. Cinara cedri (strain Cc).